The primary structure comprises 395 residues: Chalcone synthase 3 (395 aa).

Residue valine 2 is modified to N-acetylvaline. Cysteine 169 is a catalytic residue.

This sequence belongs to the thiolase-like superfamily. Chalcone/stilbene synthases family.

The enzyme catalyses (E)-4-coumaroyl-CoA + 3 malonyl-CoA + 3 H(+) = 2',4,4',6'-tetrahydroxychalcone + 3 CO2 + 4 CoA. The protein operates within secondary metabolite biosynthesis; flavonoid biosynthesis. In terms of biological role, the primary product of this enzyme is 4,2',4',6'-tetrahydroxychalcone (also termed naringenin-chalcone or chalcone) which can under specific conditions spontaneously isomerize into naringenin. The protein is Chalcone synthase 3 (CHS3) of Sinapis alba (White mustard).